A 355-amino-acid polypeptide reads, in one-letter code: Guanine nucleotide-binding protein alpha-12 subunit (355 aa).

Residues 28-355 (RQINLLLLGS…EQNLKTLMMQ (328 aa)) enclose the G-alpha domain. Residues 31–44 (NLLLLGSGESGKST) form a G1 motif region. GTP contacts are provided by residues 36–43 (GSGESGKS), 176–182 (LFCRKAT), 201–205 (DVGGQ), 270–273 (NKND), and Ala327. Residues Ser43 and Thr182 each coordinate Mg(2+). Positions 174–182 (DILFCRKAT) are G2 motif. A G3 motif region spans residues 197–206 (FRFIDVGGQR). Positions 266–273 (ILFMNKND) are G4 motif. The segment at 325-330 (TTAVDT) is G5 motif.

This sequence belongs to the G-alpha family. In terms of assembly, g proteins are composed of 3 units; alpha, beta and gamma. The alpha chain contains the guanine nucleotide binding site.

Functionally, guanine nucleotide-binding proteins (G proteins) are involved as modulators or transducers in various transmembrane signaling systems. May play a role in resistance to fungal infection in the epidermis by regulating the up-regulation of several antimicrobial peptides of the NLP and CNC families. Upstream of plc-3, tpa-1 and the p38-like pathway, required for the expression of antimicrobial peptide nlp-29 in the epidermis in response to fungal infection or physical injury. This chain is Guanine nucleotide-binding protein alpha-12 subunit (gpa-12), found in Caenorhabditis elegans.